A 454-amino-acid polypeptide reads, in one-letter code: MKQNSLNVKEKKLSKVAFSHVGCEKNLVDTEHMQGLLDKEGYEVDSNINEANVVVVNTCSFIQTAREESIRKILEYTNQGKEVIVAGCMAQHFKDELIKEIPEIKGLIGTGDYQKIAKVLDRVEKGEIVNEVSKIPEFIADEEIPRFVDKNKFVAYLRIAEGCNYNCAFCIIPKLRGPQRSRTIESIVSEAKSLAKQGIQEIILISQITTNYGQDIYGKPSLAKLLNELSKVPIPWIRIHYAYPTGLTDQVIRAFKDSKNIVPYFDLPLQHSHPDVLKSMNRPWQASLNESILEKIREEIPSAVLRTSLIVGFPGEKKEHFEHLLEFLDRHKFDHVGVFIFSPEVGTAAFDLPNKVSPEVAEARKDNVISVQQNISKDKNQSYVGSKMKILVEKISDNNELIGRSYNFAPEIDGTVILSVKDKIDLKNYSGKFVEANISFADEYDLYGETLKIL.

The region spanning S14 to K125 is the MTTase N-terminal domain. 6 residues coordinate [4Fe-4S] cluster: C23, C59, C88, C163, C167, and C170. The Radical SAM core domain occupies D149–D378. The region spanning Q381–K452 is the TRAM domain.

This sequence belongs to the methylthiotransferase family. RimO subfamily. [4Fe-4S] cluster is required as a cofactor.

The protein localises to the cytoplasm. The catalysed reaction is L-aspartate(89)-[ribosomal protein uS12]-hydrogen + (sulfur carrier)-SH + AH2 + 2 S-adenosyl-L-methionine = 3-methylsulfanyl-L-aspartate(89)-[ribosomal protein uS12]-hydrogen + (sulfur carrier)-H + 5'-deoxyadenosine + L-methionine + A + S-adenosyl-L-homocysteine + 2 H(+). Its function is as follows. Catalyzes the methylthiolation of an aspartic acid residue of ribosomal protein uS12. This Prochlorococcus marinus (strain MIT 9215) protein is Ribosomal protein uS12 methylthiotransferase RimO.